The sequence spans 501 residues: Cryptochrome-1 (501 aa).

The Photolyase/cryptochrome alpha/beta domain occupies 5 to 134 (KKTIVWFRRD…SVQSYNGDLC (130 aa)). Residues Tyr-231 and 243-247 (TSLLS) each bind FAD. Arg-356 provides a ligand contact to ATP. FAD is bound by residues Asp-386 and Asp-388. An ATP-binding site is contributed by Asp-405.

It belongs to the DNA photolyase class-1 family. As to quaternary structure, homodimer. The cofactor is FAD. (6R)-5,10-methylene-5,6,7,8-tetrahydrofolate is required as a cofactor.

Mediates blue light-induced gene expression in addition to its role in blue light-dependent inhibition of stem growth. This is Cryptochrome-1 (PHR1) from Sinapis alba (White mustard).